We begin with the raw amino-acid sequence, 94 residues long: uncharacterized protein (94 aa).

A signal peptide spans 1-22 (MIMKNCLLLGALLMGFTGVAMA).

This is an uncharacterized protein from Escherichia coli (strain K12).